The chain runs to 105 residues: MKVSVLITLAVLGVMFLLTSAEERGSDQMDSPAWLKSMEIIFQSEERECRWLFGGCEKDSDCCEHLGCRRAKPSWCGWDFTVGKWEMLINMNIFRIVFSYSMCTV.

The N-terminal stretch at 1–21 is a signal peptide; it reads MKVSVLITLAVLGVMFLLTSA. The propeptide occupies 22–48; it reads EERGSDQMDSPAWLKSMEIIFQSEERE. Cystine bridges form between cysteine 49–cysteine 63, cysteine 56–cysteine 68, and cysteine 62–cysteine 76. Valine 82 is subject to Valine amide. Residues 83–105 constitute a propeptide that is removed on maturation; sequence GKWEMLINMNIFRIVFSYSMCTV.

Belongs to the neurotoxin 10 (Hwtx-1) family. 05 (F4a) subfamily. Expressed by the venom gland.

The protein localises to the secreted. Its function is as follows. Probable ion channel inhibitor. This chain is U21-theraphotoxin-Cg1a 4, found in Chilobrachys guangxiensis (Chinese earth tiger tarantula).